The sequence spans 281 residues: ATP phosphoribosyltransferase (281 aa).

This sequence belongs to the ATP phosphoribosyltransferase family. Long subfamily. The cofactor is Mg(2+).

It localises to the cytoplasm. It carries out the reaction 1-(5-phospho-beta-D-ribosyl)-ATP + diphosphate = 5-phospho-alpha-D-ribose 1-diphosphate + ATP. The protein operates within amino-acid biosynthesis; L-histidine biosynthesis; L-histidine from 5-phospho-alpha-D-ribose 1-diphosphate: step 1/9. Its activity is regulated as follows. Feedback inhibited by histidine. Catalyzes the condensation of ATP and 5-phosphoribose 1-diphosphate to form N'-(5'-phosphoribosyl)-ATP (PR-ATP). Has a crucial role in the pathway because the rate of histidine biosynthesis seems to be controlled primarily by regulation of HisG enzymatic activity. The sequence is that of ATP phosphoribosyltransferase from Corynebacterium aurimucosum (strain ATCC 700975 / DSM 44827 / CIP 107346 / CN-1) (Corynebacterium nigricans).